The sequence spans 370 residues: MAIPSRPIREEIRSIAPYNAGLTLEEVRAKYHVDEVAKLSSNENPLGPSPALRRLFPDIGELARLYPDPQGRALCARLAASFDVENNQVILGNGSEDLIAVICRSVVRAGDTVVTLYPSFPLHEDYTTLMGGKVDRVTVTPDLSVDMDALLAAIARKPRMLMFSNPMNPVGSWLTPLQLAKVVAALDPETLIVVDEAYAEYAAGDDYPSAAEVLKVTGLNWVVLRTFSKAYGLAGLRIGYGIVSDGSLCDFFNRARTPFNTNAIAQVSALAAFDDTYHLNRSVELALVERERMKKELATMGYRIAPSKCNFLFFDARTEATPVAEALLRRGVIVKPWKQPRFETYIRVSIGSPVENDHFIHALKEVEAVG.

The residue at position 229 (Lys-229) is an N6-(pyridoxal phosphate)lysine.

It belongs to the class-II pyridoxal-phosphate-dependent aminotransferase family. Histidinol-phosphate aminotransferase subfamily. Homodimer. Pyridoxal 5'-phosphate is required as a cofactor.

The enzyme catalyses L-histidinol phosphate + 2-oxoglutarate = 3-(imidazol-4-yl)-2-oxopropyl phosphate + L-glutamate. The protein operates within amino-acid biosynthesis; L-histidine biosynthesis; L-histidine from 5-phospho-alpha-D-ribose 1-diphosphate: step 7/9. This chain is Histidinol-phosphate aminotransferase 3 (hisC3), found in Rhizobium meliloti (strain 1021) (Ensifer meliloti).